The sequence spans 248 residues: Large ribosomal subunit protein uL4 (248 aa).

Disordered stretches follow at residues 48–95 (GTHK…GPVP) and 210–248 (AFSEDRDNPGTSLPKSPTPEDSSDATKARSSRHDDRTGA). Positions 233–248 (DATKARSSRHDDRTGA) are enriched in basic and acidic residues.

The protein belongs to the universal ribosomal protein uL4 family. Part of the 50S ribosomal subunit.

One of the primary rRNA binding proteins, this protein initially binds near the 5'-end of the 23S rRNA. It is important during the early stages of 50S assembly. It makes multiple contacts with different domains of the 23S rRNA in the assembled 50S subunit and ribosome. Functionally, forms part of the polypeptide exit tunnel. This chain is Large ribosomal subunit protein uL4, found in Tropheryma whipplei (strain TW08/27) (Whipple's bacillus).